A 430-amino-acid polypeptide reads, in one-letter code: MEF2-activating motif and SAP domain-containing transcriptional regulator (430 aa).

Residues 12-28 (IIRSKFRSVLQLRIHRR) carry the MEF2-binding motif. 4 disordered regions span residues 84–172 (CWSL…PLPH), 204–239 (KSML…RFRP), 280–301 (VATT…APAS), and 330–416 (EDQV…DLSD). A compositionally biased stretch (basic and acidic residues) spans 87-103 (LKKESPKTSQHWREPKP). Residues 147-170 (QPPPRMKPTPLTPSPPGVPSPSPL) show a composition bias toward pro residues. The SAP domain maps to 181–215 (LEELTVSELRQQLRLRGLPVSGTKSMLLERMRGGA). Positions 207 to 228 (LLERMRGGAPPRERPKARREDS) are enriched in basic and acidic residues. The interval 224–430 (RREDSAAGAP…RLWDLLEDPW (207 aa)) is transcription activation. 2 stretches are compositionally biased toward low complexity: residues 363–373 (SSVFSSSLPSP) and 393–403 (ALSGGPSLGCG).

Interacts with MEF2C.

It localises to the nucleus. Its function is as follows. Transcriptional coactivator. Stimulates the transcriptional activity of MEF2C. Stimulates MYOD1 activity in part via MEF2, resulting in an enhancement of skeletal muscle differentiation. The chain is MEF2-activating motif and SAP domain-containing transcriptional regulator (MAMSTR) from Bos taurus (Bovine).